Consider the following 2849-residue polypeptide: Polycystin-1-like protein 1 (2849 aa).

At 1 to 1748 the chain is on the extracellular side; the sequence is MAEEAAQNIS…SDISKLQSHP (1748 aa). Asparagine 8, asparagine 295, asparagine 338, asparagine 376, asparagine 447, asparagine 482, asparagine 514, asparagine 605, asparagine 657, asparagine 751, asparagine 875, asparagine 926, and asparagine 937 each carry an N-linked (GlcNAc...) asparagine glycan. PKD domains follow at residues 508–590 and 592–673; these read SVSV…VQKK and VANR…VCEP. One can recognise an REJ domain in the interval 674–1571; it reads CQPPLVKNMG…GEEDGLDNRR (898 aa). The span at 970–987 shows a compositional bias: low complexity; sequence NLLPTEPGTADPDATTTP. 2 disordered regions span residues 970-1068 and 1081-1118; these read NLLP…PHLS and IPSG…DPSL. A compositionally biased stretch (basic and acidic residues) spans 1053–1068; sequence RSERSQPTHSPDPHLS. 6 N-linked (GlcNAc...) asparagine glycosylation sites follow: asparagine 1233, asparagine 1301, asparagine 1306, asparagine 1572, asparagine 1681, and asparagine 1716. Residues 1587-1735 enclose the GAIN-B domain; that stretch reads QFTELSENPQ…ALLRRKLKAS (149 aa). Cysteine 1691 and cysteine 1717 are oxidised to a cystine. The GPS stretch occupies residues 1691 to 1735; the sequence is CLFWDKREWKSERFSPQPGTSPEKVNCSYHRLAAFALLRRKLKAS. Residues 1749–1769 traverse the membrane as a helical segment; it reads ENLLPSIFIMGSVILYGFLVA. Topologically, residues 1770-1956 are cytoplasmic; sequence KSRQVDHHEK…SSSRYLHTPR (187 aa). The 118-residue stretch at 1796-1913 folds into the PLAT domain; the sequence is QLYAVVIDTG…HDGRVERELT (118 aa). The chain crosses the membrane as a helical span at residues 1957–1977; it reads LTVSFSLLCVYACLTALVAAG. The Extracellular segment spans residues 1978-1992; that stretch reads GQEQPHLDVSPTLGS. A helical membrane pass occupies residues 1993 to 2013; it reads FRVGLLCTLLASPGAQLLSLL. The Cytoplasmic segment spans residues 2014-2135; it reads FRLSKEAPGS…SRALQPWWSS (122 aa). A disordered region spans residues 2023–2089; the sequence is SARVEPHSPL…GTACPAPKLQ (67 aa). The chain crosses the membrane as a helical span at residues 2136-2156; the sequence is AVWAICGTASLACSLGTGFLA. Residues 2157 to 2174 lie on the Extracellular side of the membrane; the sequence is YRFGQEQCVQWLHLLSLS. A helical transmembrane segment spans residues 2175–2195; sequence VVCCIFITQPLMVCLMALGFA. Residues 2196-2281 lie on the Cytoplasmic side of the membrane; sequence WKRRADNHFF…QRMRRESRTR (86 aa). The helical transmembrane segment at 2282-2302 threads the bilayer; the sequence is AALRDISMDILMLLLLLCVIY. Residues 2303 to 2522 are Extracellular-facing; it reads GRFSQDEYSL…FRSDSALQYH (220 aa). Asparagine 2426 is a glycosylation site (N-linked (GlcNAc...) asparagine). Residues 2523-2543 form a helical membrane-spanning segment; sequence LMLPQLVFLALSLIHLCVQLY. Topologically, residues 2544-2562 are cytoplasmic; the sequence is RMMDKGVLSYWRKPRNWLE. The chain crosses the membrane as a helical span at residues 2563–2583; the sequence is LSVVGVSLTYYAVSGHLVTLA. Over 2584-2616 the chain is Extracellular; it reads GDVTNQFHRGLCRAFMDLTLMASWNQRARWLRG. The chain crosses the membrane as a helical span at residues 2617–2637; the sequence is ILLFLFTLKCVYLPGIQNTMA. The Cytoplasmic segment spans residues 2638–2646; it reads SCSSMMRHS. Residues 2647 to 2667 form a helical membrane-spanning segment; the sequence is LPSIFVAGLVGALMLAALSHL. Over 2668–2711 the chain is Extracellular; that stretch reads HRFLLSMWVLPPGTFTDAFPGLLFHFPRRSQKDCLLGLSKSDQR. Residues 2712–2732 form a helical membrane-spanning segment; that stretch reads AMACYFGILLIVSATLCFGML. Residues 2733 to 2849 are Cytoplasmic-facing; sequence RGFLMTLPQK…AAEPADIKDF (117 aa).

It belongs to the polycystin family. As to quaternary structure, heterodimer. Interacts with PKD2 to form a calcium channel. Interacts with PKD2L1; to form ciliary calcium channel. May interact with GNA12, GNAS, GNAI1 and GNAI2. As to expression, detected in testis and in fetal and adult heart.

The protein localises to the cell projection. It localises to the cilium membrane. Its function is as follows. Component of a calcium-permeant ion channel formed by PKD1L2 and PKD1L1 in primary cilia, where it controls cilium calcium concentration, without affecting cytoplasmic calcium concentration, and regulates sonic hedgehog/SHH signaling and GLI2 transcription. The PKD1L1:PKD2L1 channel complex is mechanosensitive only at high pressures and is highly temperature sensitive. Also involved in left/right axis specification downstream of nodal flow by forming a complex with PKD2 in cilia to facilitate flow detection in left/right patterning. May function as a G-protein-coupled receptor. This Homo sapiens (Human) protein is Polycystin-1-like protein 1.